The chain runs to 361 residues: 5-formaminoimidazole-4-carboxamide-1-(beta)-D-ribofuranosyl 5'-monophosphate synthetase (361 aa).

5-amino-1-(5-phospho-beta-D-ribosyl)imidazole-4-carboxamide contacts are provided by His-27 and Ser-94. The ATP-grasp domain maps to 116–348 (RAILRWEAER…MGQRIAKEIK (233 aa)). Residues 146–208 (PDEI…ANYC) and Glu-230 each bind ATP. Asn-258 serves as a coordination point for 5-amino-1-(5-phospho-beta-D-ribosyl)imidazole-4-carboxamide. Residues Gln-297 and Glu-310 each contribute to the Mg(2+) site.

Belongs to the phosphohexose mutase family. It depends on Mg(2+) as a cofactor. Requires Mn(2+) as cofactor.

The enzyme catalyses 5-amino-1-(5-phospho-beta-D-ribosyl)imidazole-4-carboxamide + formate + ATP = 5-formamido-1-(5-phospho-D-ribosyl)imidazole-4-carboxamide + ADP + phosphate. Its pathway is purine metabolism; IMP biosynthesis via de novo pathway; 5-formamido-1-(5-phospho-D-ribosyl)imidazole-4-carboxamide from 5-amino-1-(5-phospho-D-ribosyl)imidazole-4-carboxamide (formate route): step 1/1. In terms of biological role, catalyzes the ATP- and formate-dependent formylation of 5-aminoimidazole-4-carboxamide-1-beta-d-ribofuranosyl 5'-monophosphate (AICAR) to 5-formaminoimidazole-4-carboxamide-1-beta-d-ribofuranosyl 5'-monophosphate (FAICAR) in the absence of folates. In Methanococcus vannielii (strain ATCC 35089 / DSM 1224 / JCM 13029 / OCM 148 / SB), this protein is 5-formaminoimidazole-4-carboxamide-1-(beta)-D-ribofuranosyl 5'-monophosphate synthetase.